The primary structure comprises 84 residues: UPF0386 protein Oant_1614 (84 aa).

Belongs to the UPF0386 family.

This is UPF0386 protein Oant_1614 from Brucella anthropi (strain ATCC 49188 / DSM 6882 / CCUG 24695 / JCM 21032 / LMG 3331 / NBRC 15819 / NCTC 12168 / Alc 37) (Ochrobactrum anthropi).